The sequence spans 288 residues: Transposase for insertion sequence element IS1106 (288 aa).

It belongs to the transposase 11 family.

In terms of biological role, involved in the transposition of the insertion sequence. The chain is Transposase for insertion sequence element IS1106 from Neisseria meningitidis serogroup B.